A 354-amino-acid chain; its full sequence is Serum paraoxonase/arylesterase 2 (354 aa).

Cysteine 42 and cysteine 352 are joined by a disulfide. Residues glutamate 53 and aspartate 54 each coordinate Ca(2+). Histidine 114 (proton acceptor) is an active-site residue. 4 residues coordinate Ca(2+): isoleucine 116, asparagine 167, aspartate 168, and asparagine 223. The N-linked (GlcNAc...) asparagine glycan is linked to asparagine 254. Aspartate 268 and asparagine 269 together coordinate Ca(2+). Residues asparagine 269 and asparagine 323 are each glycosylated (N-linked (GlcNAc...) asparagine).

Belongs to the paraoxonase family. Homotrimer. Ca(2+) serves as cofactor. In terms of processing, glycosylated. Post-translationally, the signal sequence is not cleaved.

It is found in the membrane. It catalyses the reaction a phenyl acetate + H2O = a phenol + acetate + H(+). The enzyme catalyses an N-acyl-L-homoserine lactone + H2O = an N-acyl-L-homoserine + H(+). Capable of hydrolyzing lactones and a number of aromatic carboxylic acid esters. This Rattus norvegicus (Rat) protein is Serum paraoxonase/arylesterase 2 (Pon2).